Here is a 92-residue protein sequence, read N- to C-terminus: Small ribosomal subunit protein uS19 (92 aa).

The protein belongs to the universal ribosomal protein uS19 family.

In terms of biological role, protein S19 forms a complex with S13 that binds strongly to the 16S ribosomal RNA. This chain is Small ribosomal subunit protein uS19, found in Bacillus licheniformis (strain ATCC 14580 / DSM 13 / JCM 2505 / CCUG 7422 / NBRC 12200 / NCIMB 9375 / NCTC 10341 / NRRL NRS-1264 / Gibson 46).